The sequence spans 677 residues: Polyunsaturated fatty acid lipoxygenase ALOX8 (677 aa).

Residues A2–K125 enclose the PLAT domain. G15, G17, D39, H40, G42, E44, D86, and A87 together coordinate Ca(2+). The Lipoxygenase domain maps to V126–I677. Positions 374, 379, 554, and 677 each coordinate Fe cation.

The protein belongs to the lipoxygenase family. Requires Fe cation as cofactor. As to expression, expressed in epidermis and brain. No expression found in heart, spleen, liver, skeletal muscle, kidney or testis.

The protein localises to the cytoplasm. The protein resides in the cytosol. It is found in the membrane. It catalyses the reaction (9Z,12Z)-octadecadienoate + O2 = (9S)-hydroperoxy-(10E,12Z)-octadecadienoate. The enzyme catalyses (5Z,8Z,11Z,14Z)-eicosatetraenoate + O2 = (8S)-hydroperoxy-(5Z,9E,11Z,14Z)-eicosatetraenoate. It carries out the reaction (15S)-hydroperoxy-(5Z,8Z,11Z,13E)-eicosatetraenoate + O2 = (8S,15S)-dihydroperoxy-(5Z,9E,11Z,13E)-eicosatetraenoate. The catalysed reaction is (8S)-hydroperoxy-(5Z,9E,11Z,14Z)-eicosatetraenoate + O2 = (8S,15S)-dihydroperoxy-(5Z,9E,11Z,13E)-eicosatetraenoate. It catalyses the reaction 1-octadecanoyl-2-(5Z,8Z,11Z,14Z-eicosatetraenoyl)-sn-glycero-3-phosphocholine + O2 = 1-octadecanoyl-2-(15-hydroperoxy-5Z,8Z,11Z,13E-eicosatetraenoyl)-sn-glycero-3-phosphocholine. The enzyme catalyses a 1-acyl-2-(5Z,8Z,11Z,14Z-eicosatetraenoyl)-sn-glycero-3-phospho-(1D-myo-inositol) + O2 = a 1-acyl-2-(15-hydroperoxy-5Z,8Z,11Z,13E-eicosatetraenoyl)-sn-glycero-3-phospho-(1D-myo-inositol). It carries out the reaction a 1-acyl-2-(8Z,11Z,14Z-eicosatrienoyl)-sn-glycero-3-phospho-(1D-myo-inositol) + O2 = a 1-acyl-2-(15-hydroperoxy-8Z,11Z,13E-eicosatrienoyl)-sn-glycero-3-phospho-(1D-myo-inositol). The catalysed reaction is (5Z,8Z,11Z,14Z)-eicosatetraenoate + O2 = 9-hydroperoxy-(5Z,7E,11Z,14Z)-eicosatetraenoate. It catalyses the reaction (5Z,8Z,11Z,14Z)-eicosatetraenoate + O2 = 11-hydroperoxy-(5Z,8Z,12E,14Z)-eicosatetraenoate. The enzyme catalyses (8Z,11Z,14Z)-eicosatrienoate + O2 = 15-hydroperoxy-(8Z,11Z,13E)-eicosatrienoate. It functions in the pathway lipid metabolism; hydroperoxy eicosatetraenoic acid biosynthesis. Its function is as follows. Non-heme iron-containing dioxygenase that catalyzes the stereo-specific peroxidation of free and esterified polyunsaturated fatty acids generating a spectrum of bioactive lipid mediators. Catalyzes the peroxidation of arachidonate and linoleate into (8S)-HPETE and (9S)-HPODE respectively. In addition to generate (8S)-HPETE from free arachidonic acid (AA), may produce other HETE isomers from phospholipid-esterified polyunsaturated fatty acids and minor products derived from (8S)-HPETE itself that may include leukotriene A4 and 8,15-diHPETE. With free arachidonate as substrate, has no detectable 15S-lipoxygenase activity and only displays a 8S-lipoxygenase activity. However may have a 15S-lipoxygenase activity with (8S)-HPETE to produce (8S,15S)-diHPETE and when oxidizes directly arachidonic acid esterified to membrane-bound phospholipids to produce a phospholipid-esterified 15-HpETE. May also catalyze (15S)-HPETE peroxidation to produce 8,15-diHPETE. May play a role in keratinocyte differentiation through activation of the peroxisome proliferator activated receptor signaling pathway. This Mus musculus (Mouse) protein is Polyunsaturated fatty acid lipoxygenase ALOX8.